The primary structure comprises 1256 residues: SNF2 domain-containing protein CLASSY 1 (1256 aa).

2 disordered regions span residues 269 to 290 and 448 to 467; these read ELRR…EIQP and GNVV…VSRE. The span at 278-290 shows a compositional bias: basic and acidic residues; sequence GRPERYGDSEIQP. Residues 451-463 show a composition bias toward basic residues; it reads VHKRNGPHSRIRS. The 200-residue stretch at 699-898 folds into the Helicase ATP-binding domain; the sequence is DPSSDKIGGC…FNTLCLARPK (200 aa). 712 to 719 contacts ATP; it reads HTPGAGKT. The short motif at 849 to 852 is the DEAH box element; the sequence is DEGH. The region spanning 1061–1222 is the Helicase C-terminal domain; that stretch reads FVLNLVFRVV…EFVEDPSQWQ (162 aa).

The protein belongs to the helicase family. In terms of assembly, interacts with NRPD1, NRPD3 and SHH1.

It localises to the nucleus. Its subcellular location is the nucleoplasm. The protein localises to the nucleolus. Its function is as follows. Probable chromatin remodeling factor. Required for the initial establishment of DNA methylation and for accumulation of 24-nt siRNAs. May act on RNA templates by remodeling ribonucleoprotein structures and thereby influencing the availability of the RNA to polymerases. This is SNF2 domain-containing protein CLASSY 1 (CLSY1) from Arabidopsis thaliana (Mouse-ear cress).